A 382-amino-acid chain; its full sequence is Acetyltransferase eriL (382 aa).

6 helical membrane passes run 5–25, 33–53, 59–79, 146–166, 192–212, and 335–355; these read LQPLPGGLQVAVQACLFLGAV, ALLFPPVLAMSLYMLLYTTTG, IVTWSLITTSLLQGSDILLIN, TLFYFVVLDLVHTFIVLSPVF, LWSYMSFGYSAASVVLVALGV, and GYMWTFLWFVFTLPHWMDPQF.

Belongs to the wax synthase family.

The protein localises to the membrane. The catalysed reaction is cyathatriol + acetyl-CoA = 11-O-acetylcyathatriol + CoA. It carries out the reaction cyathin A3 + acetyl-CoA = 11-O-acetylcyathin A3 + CoA. The protein operates within secondary metabolite biosynthesis. In terms of biological role, acetyltransferase; part of the gene cluster that mediates the biosynthesis of erinacines, cyathane-xylosides that show unique biological activities, including leishmanicidal activity, stimulating activity for nerve growth-factor synthesis, and agonistic activity toward the kappa opioid receptor. Within the pathway, eriL converts cyathatriol into 11-O-acetyl-cyathatriol. EriL is also able to acetylate cyathin A3 to produce 11-O-acetylcyathin A3. The first step of the erinacines biosynthesis pathway is catalyzed by the geranylgeranyl diphosphate (GGPP) synthase eriE via conversion of farnesyl pyrophosphate and isopentyl pyrophosphate into geranylgeranyl pyrophosphate (GGPP). GGPP is then substrate of the diterpene cyclase eriG for the production of cyatha-3,12-diene. The cytochrome P450 monooxygenase eriI then hydroxylates cyatha-3,12-diene at C-14 of the seven-membered ring to produce erinacol, which is further hydroxylated at C-15 by the cytochrome P450 monooxygenase eriC to yield cyathadiol. The cytochrome P450 monooxygenase eriA then catalyzes C-11 hydroxylation in the presence of the short chain dehydrogenase/reductase (SDR) eriH, which leads to the production of cyathatriol. The acetyltransferase eriL converts cyathatriol into 11-O-acetyl-cyathatriol. The SDR eriH catalyzes further oxidation of 11-O-acetyl-cyathatriol into 1-O-acetylcyathin A3. Finally, the glycosyl transferase eriJ tranfers xylose from UDP-xylose onto C-14 of 11-O-acetyl-cyathatriol to form eracine Q. EriJ is also able to convert 11-O-acetyl-cyathatriol to eracine Q2 by using UDP-D-glucose as cosubstrate, but at a lower rate. In Hericium erinaceus (Lion's mane mushroom), this protein is Acetyltransferase eriL.